We begin with the raw amino-acid sequence, 69 residues long: Sec-independent protein translocase protein TatA (69 aa).

Residues 1–21 form a helical membrane-spanning segment; the sequence is MFGLGGQELILILLIILLLFG.

Belongs to the TatA/E family. Forms a complex with TatC.

Its subcellular location is the cell inner membrane. In terms of biological role, part of the twin-arginine translocation (Tat) system that transports large folded proteins containing a characteristic twin-arginine motif in their signal peptide across membranes. TatA could form the protein-conducting channel of the Tat system. This is Sec-independent protein translocase protein TatA from Chlorobium phaeovibrioides (strain DSM 265 / 1930) (Prosthecochloris vibrioformis (strain DSM 265)).